We begin with the raw amino-acid sequence, 140 residues long: Class I hydrophobin B (140 aa).

The N-terminal stretch at 1-16 (MKFLAVVSLLAATALA) is a signal peptide. 4 cysteine pairs are disulfide-bonded: C42–C113, C50–C107, C51–C88, and C114–C133. N117 is a glycosylation site (N-linked (GlcNAc...) asparagine).

It belongs to the fungal hydrophobin family. Self-assembles to form functional amyloid fibrils called rodlets. Self-assembly into fibrillar rodlets occurs spontaneously at hydrophobic:hydrophilic interfaces and the rodlets further associate laterally to form amphipathic monolayers.

The protein localises to the secreted. The protein resides in the spore wall. Functionally, aerial growth, conidiation, and dispersal of filamentous fungi in the environment rely upon a capability of their secreting small amphipathic proteins called hydrophobins (HPBs) with low sequence identity. Class I can self-assemble into an outermost layer of rodlet bundles on aerial cell surfaces, conferring cellular hydrophobicity that supports fungal growth, development and dispersal; whereas Class II form highly ordered films at water-air interfaces through intermolecular interactions but contribute nothing to the rodlet structure. RodB is a class I hydrophobin that, unlike rodA, is not required for rodlet formation. This chain is Class I hydrophobin B, found in Aspergillus fumigatus (strain ATCC MYA-4609 / CBS 101355 / FGSC A1100 / Af293) (Neosartorya fumigata).